Reading from the N-terminus, the 377-residue chain is Guanine nucleotide-binding protein subunit beta (377 aa).

7 WD repeats span residues 63–93 (GHTG…IVWN), 105–135 (LPCA…SIFN), 154–185 (GHKG…VLWD), 202–233 (GHTA…RLWD), 246–276 (CHEG…RLFD), 293–323 (GDIP…YVWD), and 339–369 (SHEG…KIWA).

This sequence belongs to the WD repeat G protein beta family. As to quaternary structure, g proteins are composed of 3 units, alpha, beta and gamma.

It localises to the cell membrane. The protein localises to the endoplasmic reticulum membrane. Its function is as follows. Guanine nucleotide-binding proteins (G proteins) are involved as a modulator or transducer in various transmembrane signaling systems. The beta and gamma chains are required for the GTPase activity, for replacement of GDP by GTP, and for G protein-effector interaction. In Nicotiana plumbaginifolia (Leadwort-leaved tobacco), this protein is Guanine nucleotide-binding protein subunit beta.